Consider the following 43-residue polypeptide: Alpha-1-antiproteinase 4 (43 aa).

Belongs to the serpin family. Post-translationally, N-glycosylated with carbohydrates having biantennary side chains. In terms of tissue distribution, plasma.

It is found in the secreted. This is Alpha-1-antiproteinase 4 from Equus caballus (Horse).